The following is a 151-amino-acid chain: Histone H2B.1 (151 aa).

Composition is skewed to basic and acidic residues over residues 1 to 28 (MAPK…EKAP) and 36 to 51 (EKRL…GEGK). Residues 1–58 (MAPKAEKKPAAKKPAEEEPATEKVEKAPAGKKPKAEKRLPAGKSKEGGEGKKGKKKAK) form a disordered region. An N6-acetyllysine mark is found at K7 and K37. Residue K147 forms a Glycyl lysine isopeptide (Lys-Gly) (interchain with G-Cter in ubiquitin) linkage.

It belongs to the histone H2B family. As to quaternary structure, the nucleosome is a histone octamer containing two molecules each of H2A, H2B, H3 and H4 assembled in one H3-H4 heterotetramer and two H2A-H2B heterodimers. The octamer wraps approximately 147 bp of DNA. Post-translationally, can be acetylated to form H2BK6ac and H2BK33ac. In terms of processing, monoubiquitinated to form H2BK143ub1; may give a specific tag for epigenetic transcriptional activation.

It is found in the nucleus. The protein localises to the chromosome. Core component of nucleosome. Nucleosomes wrap and compact DNA into chromatin, limiting DNA accessibility to the cellular machineries which require DNA as a template. Histones thereby play a central role in transcription regulation, DNA repair, DNA replication and chromosomal stability. DNA accessibility is regulated via a complex set of post-translational modifications of histones, also called histone code, and nucleosome remodeling. This Zea mays (Maize) protein is Histone H2B.1.